The primary structure comprises 1048 residues: MEGRSAAAETFVWVNNASAHSQSVAKAKYEFLFGRSEGKAPDTSDHGGSTLLPPNVTNEFPEYGTMEEGGEGLRASLEFDGEALPCHPQEQQGVQPLTGCHSGLDSVTEGPKDVREAPSQSHLKEQSLQPIDSLISALKATEARIISGTLQATKVLDQDAVSSFSVQQVEKELDTASRKTQRVNKTLPAGQKNLPEIPLSAEVTTEESFYLSIQKDLTALLTGDTQAEISQIMNNGRKGAVCVQEPSCPLASLGSSAVTCHSAGSVGFLKEQRSALGREHPGGCDRSSSMGRPGRVKHVEFQGVEILWTGGDKRETQHPIDFETSLQRTASPDSKESSKVPRHLISSAGLCNSSSLTENVWDESWKAPSERPGTSSGTFSPVRLDESGEDEVFLQENKQHLEKTPKPERDRERISEQEEHVKGEDEDILGPGYTEDSTDVYSSQFETILDNTSLYYSAESLETLYSEPDSYFSFEMPLTPMIQQRIKEGGQFLERTSGGGHQDILSVSADGGIVMGYSSGVTNGLNDASDSIYTKGTPEIAFWGSNAGVKTTRLEAHSEMGSTEILEKETPENLSNGTSSNVEAAKRLAKRLYQLDRFKRSDVAKHLGKNNEFSKLVAEEYLKFFDFTGMTLDQSLRYFFKAFSLVGETQERERVLIHFSNRYFYCNPDTIASQDGVHCLTCAIMLLNTDLHGHVNIGKKMTCQEFIANLQGVNEGVDFSKDLLKALYNSIKNEKLEWAVDDEEKKKSPSESTEEKANGTHPKTISRIGSTTNPFLDIPHDPNAAVYKSGFLARKIHADMDGKKTPRGKRGWKTFYAVLKGTVLYLQKDEYKPEKALSEEDLKNAVSVHHALASKATDYEKKPNVFKLKTADWRVLLFQTQSPEEMQGWINKINCVAAVFSAPPFPAAIGSQKKFSRPLLPATTTKLSQEEQLKSHESKLKQITTELAEHRSYPPDKKVKAKDVDEYKLKDHYLEFEKTRYEMYVSILKEGGKELLSNDESEAAGLKKSHSSPSLNPDTSPITAKVKRNVSERKDHRPETPSIKQKVT.

Over residues 36-45 (SEGKAPDTSD) the composition is skewed to basic and acidic residues. The tract at residues 36 to 57 (SEGKAPDTSDHGGSTLLPPNVT) is disordered. At serine 76 the chain carries Phosphoserine. 4 disordered regions span residues 104–126 (LDSV…LKEQ), 310–342 (GGDK…KVPR), 364–383 (SWKA…SPVR), and 395–434 (QENK…PGYT). A compositionally biased stretch (basic and acidic residues) spans 311–321 (GDKRETQHPID). The segment covering 397-423 (NKQHLEKTPKPERDRERISEQEEHVKG) has biased composition (basic and acidic residues). Residues 534–734 (TKGTPEIAFW…KALYNSIKNE (201 aa)) enclose the SEC7 domain. A compositionally biased stretch (basic and acidic residues) spans 741–758 (DDEEKKKSPSESTEEKAN). Residues 741–769 (DDEEKKKSPSESTEEKANGTHPKTISRIG) form a disordered region. Serine 770 carries the post-translational modification Phosphoserine. The 114-residue stretch at 785–898 (AVYKSGFLAR…WINKINCVAA (114 aa)) folds into the PH domain. Positions 922–952 (ATTTKLSQEEQLKSHESKLKQITTELAEHRS) form a coiled coil. A disordered region spans residues 999-1048 (DESEAAGLKKSHSSPSLNPDTSPITAKVKRNVSERKDHRPETPSIKQKVT). Phosphoserine occurs at positions 1009, 1011, 1012, 1014, and 1020. A compositionally biased stretch (polar residues) spans 1011–1022 (SSPSLNPDTSPI). Positions 1029-1039 (NVSERKDHRPE) are enriched in basic and acidic residues.

In terms of tissue distribution, isoform 2 is expressed in epididymis (at protein level).

The protein resides in the cell membrane. The protein localises to the cell projection. It localises to the ruffle membrane. Its subcellular location is the postsynaptic density. Functionally, guanine nucleotide exchange factor for ARF6. In Homo sapiens (Human), this protein is PH and SEC7 domain-containing protein 3 (PSD3).